A 189-amino-acid polypeptide reads, in one-letter code: Holliday junction branch migration complex subunit RuvA (189 aa).

Positions 1–63 are domain I; the sequence is MIYAMYGVLE…DDEISLYGFS (63 aa). The interval 64–135 is domain II; it reads DVLKLKLFEK…ELKDSMKEFD (72 aa). Residues 135-139 are flexible linker; sequence DVTLT. Positions 140–189 are domain III; it reads EKDKKILEAIEALVTLGFSRNQSKKAVTQILKKDDSLDDIIKKALKFLSR.

Belongs to the RuvA family. Homotetramer. Forms an RuvA(8)-RuvB(12)-Holliday junction (HJ) complex. HJ DNA is sandwiched between 2 RuvA tetramers; dsDNA enters through RuvA and exits via RuvB. An RuvB hexamer assembles on each DNA strand where it exits the tetramer. Each RuvB hexamer is contacted by two RuvA subunits (via domain III) on 2 adjacent RuvB subunits; this complex drives branch migration. In the full resolvosome a probable DNA-RuvA(4)-RuvB(12)-RuvC(2) complex forms which resolves the HJ.

Its subcellular location is the cytoplasm. Functionally, the RuvA-RuvB-RuvC complex processes Holliday junction (HJ) DNA during genetic recombination and DNA repair, while the RuvA-RuvB complex plays an important role in the rescue of blocked DNA replication forks via replication fork reversal (RFR). RuvA specifically binds to HJ cruciform DNA, conferring on it an open structure. The RuvB hexamer acts as an ATP-dependent pump, pulling dsDNA into and through the RuvAB complex. HJ branch migration allows RuvC to scan DNA until it finds its consensus sequence, where it cleaves and resolves the cruciform DNA. In Thermosipho melanesiensis (strain DSM 12029 / CIP 104789 / BI429), this protein is Holliday junction branch migration complex subunit RuvA.